We begin with the raw amino-acid sequence, 655 residues long: A-type voltage-gated potassium channel KCND3 (655 aa).

The Cytoplasmic portion of the chain corresponds to 1 to 182 (MAAGVAAWLP…FENPHTSTLA (182 aa)). Positions 6-21 (AAWLPFARAAAIGWMP) are interaction with KCNIP1 and KCNIP2. The interval 70 to 78 (EKEFFFNED) is interaction with KCNIP1. 4 residues coordinate Zn(2+): His-104, Cys-110, Cys-131, and Cys-132. The residue at position 153 (Ser-153) is a Phosphoserine. Residues 183–204 (LVFYYVTGFFIAVSVITNVVET) traverse the membrane as a helical segment. At 205-223 (VPCGTVPGSKELPCGERYS) the chain is on the extracellular side. Residues 224–246 (VAFFCLDTACVMIFTVEYLLRLF) form a helical membrane-spanning segment. Residues 247–253 (AAPSRYR) are Cytoplasmic-facing. A helical transmembrane segment spans residues 254–277 (FIRSVMSIIDVVAIMPYYIGLVMT). Over 278 to 283 (NNEDVS) the chain is Extracellular. A helical; Voltage-sensor transmembrane segment spans residues 284–306 (GAFVTLRVFRVFRIFKFSRHSQG). Topologically, residues 307 to 318 (LRILGYTLKSCA) are cytoplasmic. The chain crosses the membrane as a helical span at residues 319-343 (SELGFLLFSLTMAIIIFATVMFYAE). At 344-352 (KGSSASKFT) the chain is on the extracellular side. The helical intramembrane region spans 353–366 (SIPASFWYTIVTMT). K(+) contacts are provided by Thr-367, Leu-368, Gly-369, and Tyr-370. Positions 367 to 372 (TLGYGD) match the Selectivity filter motif. The stretch at 367-374 (TLGYGDMV) is an intramembrane region. A helical transmembrane segment spans residues 378–400 (IAGKIFGSICSLSGVLVIALPVP). At 401 to 655 (VIVSNFSRIY…ASNVVKVSAL (255 aa)) the chain is on the cytoplasmic side. At Thr-459 the chain carries Phosphothreonine. The interaction with KCNIP1 and KCNIP2 stretch occupies residues 470–487 (SLIESQHHHLLHCLEKTT). Residues 472-487 (IESQHHHLLHCLEKTT) are mediates dendritic targeting. The span at 525 to 548 (MQNYPSTRSPSLSSHPGLTTTCCS) shows a compositional bias: polar residues. Residues 525 to 565 (MQNYPSTRSPSLSSHPGLTTTCCSRRSKKTTHLPNSNLPAT) form a disordered region. Ser-569 is subject to Phosphoserine; by CaMK2D. A Phosphoserine modification is found at Ser-585. The segment at 615–655 (ISIPTPPALTPEGESRPPPASPGPNTNIPSIASNVVKVSAL) is disordered. The span at 637-647 (GPNTNIPSIAS) shows a compositional bias: polar residues.

Belongs to the potassium channel family. D (Shal) (TC 1.A.1.2) subfamily. Kv4.3/KCND3 sub-subfamily. In terms of assembly, homotetramer. Heterotetramer with KCND2. Associates with the regulatory subunits KCNIP3 and KCNIP4. Interacts with KCNE1, KCNE2, SCN1B and KCNAB1 and DLG1. Component of heteromultimeric potassium channels. Identified in potassium channel complexes containing KCND1, KCND2, KCND3, KCNIP1, KCNIP2, KCNIP3, KCNIP4, DPP6 and DPP10. Interacts with KCNIP1; each KCNIP1 monomer interacts with two adjacent KCND3 subunits, through both the N-terminal inactivation ball of a KCND3 subunit and a C-terminal helix from the adjacent KCND3 subunit, clamping them together; this interaction stabilizes the tetrameric form and modulates the channel gating kinetics namely channel activation and inactivation kinetics and rate of recovery from inactivation. Interacts with DPP6; this interaction modulates the channel gating kinetics namely channel activation and inactivation kinetics and rate of recovery from inactivation. Interacts with KCNIP2; each KCNIP2 monomer interacts with two adjacent KCND3 subunits, through both the N-terminal inactivation ball of a KCND3 subunit and a C-terminal helix from the adjacent KCND3 subunit, clamping them together; this interaction modulates the channel gating kinetics. Regulated through phosphorylation at Ser-569 by CaMK2D. Highly expressed in heart and brain, in particular in cortex, cerebellum, amygdala and caudate nucleus. Detected at lower levels in liver, skeletal muscle, kidney and pancreas.

The protein localises to the cell membrane. Its subcellular location is the sarcolemma. It localises to the cell projection. The protein resides in the dendrite. It catalyses the reaction K(+)(in) = K(+)(out). In terms of biological role, pore-forming (alpha) subunit of voltage-gated A-type potassium channels that mediates transmembrane potassium transport in excitable membranes, in brain and heart. In cardiomyocytes, may generate the transient outward potassium current I(To). In neurons, may conduct the transient subthreshold somatodendritic A-type potassium current (ISA). Kinetics properties are characterized by fast activation at subthreshold membrane potentials, rapid inactivation, and quick recovery from inactivation. Channel properties are modulated by interactions with regulatory subunits. Interaction with the regulatory subunits KCNIP1 or KCNIP2 modulates the channel gating kinetics namely channel activation and inactivation kinetics and rate of recovery from inactivation. Likewise, interaction with DPP6 modulates the channel gating kinetics namely channel activation and inactivation kinetics. This Homo sapiens (Human) protein is A-type voltage-gated potassium channel KCND3 (KCND3).